The following is a 549-amino-acid chain: Limonene dehydrogenase subunit B (549 aa).

This sequence belongs to the carotenoid/retinoid oxidoreductase family. As to quaternary structure, heterodimer composed of CtmA and CtmB. The cofactor is FAD.

Its subcellular location is the cytoplasm. It carries out the reaction (4S)-limonene + A + H2O = (4S)-perillyl alcohol + AH2. The catalysed reaction is (4R)-limonene + A + H2O = (4R)-perillyl alcohol + AH2. Its pathway is terpene metabolism; monoterpene degradation. Its activity is regulated as follows. The presence of molecular oxygen causes a 40% reduction in specific activity. In terms of biological role, involved in the degradation of the cyclic monoterpene limonene. Catalyzes the oxidation of limonene at the primary methyl group, forming perillyl alcohol. Hydroxylates the R- and S-enantiomers to their respective enantiomeric form of perillyl alcohol at a similar rate. Native CtmAB oxidizes a wide range of monocyclic monoterpenes containing the allylic methyl group motif (1-methyl-cyclohex-1-ene). Can also catalyze the reverse reaction, the reduction of perillyl alcohol to limonene, but with lower efficiency. Cannot use molecular oxygen as an electron acceptor. The natural electron acceptor is likely a heterodimeric electron transfer flavoprotein (ETF). The sequence is that of Limonene dehydrogenase subunit B from Castellaniella defragrans (strain DSM 12143 / CCUG 39792 / 65Phen) (Alcaligenes defragrans).